A 243-amino-acid polypeptide reads, in one-letter code: Carboxy-S-adenosyl-L-methionine synthase (243 aa).

S-adenosyl-L-methionine contacts are provided by residues tyrosine 40, glycine 65–serine 67, aspartate 90–asparagine 91, aspartate 118–isoleucine 119, asparagine 133, and arginine 200.

This sequence belongs to the class I-like SAM-binding methyltransferase superfamily. Cx-SAM synthase family. As to quaternary structure, homodimer.

The catalysed reaction is prephenate + S-adenosyl-L-methionine = carboxy-S-adenosyl-L-methionine + 3-phenylpyruvate + H2O. Functionally, catalyzes the conversion of S-adenosyl-L-methionine (SAM) to carboxy-S-adenosyl-L-methionine (Cx-SAM). The chain is Carboxy-S-adenosyl-L-methionine synthase from Shewanella sp. (strain ANA-3).